A 49-amino-acid polypeptide reads, in one-letter code: Large ribosomal subunit protein eL40 (49 aa).

Belongs to the eukaryotic ribosomal protein eL40 family.

This Halorubrum lacusprofundi (strain ATCC 49239 / DSM 5036 / JCM 8891 / ACAM 34) protein is Large ribosomal subunit protein eL40.